A 245-amino-acid chain; its full sequence is DNA terminal protein (245 aa).

The Nuclear localization signal motif lies at 4–55 (KRLKKKLETKRKKSLLVSEGYSKKETKKLKGRELETVYKKKAHNRKNRERAR). O-(5'-phospho-DNA)-tyrosine is present on Y194.

In terms of assembly, interacts with the DNA-binding protein P1.

The protein resides in the virion. Functionally, acts as a primer for viral genomic replication. DNA terminal protein is covalently linked to the 5'-ends of both strands of the genome through a phosphodiester bond between the beta-hydroxyl group of a tyrosine residue and the 5'-phosphate of the terminal deoxythymidylate. This protein is essential for DNA replication and is involved in the priming of DNA elongation. The chain is DNA terminal protein from Bacillus thuringiensis (Bacillus thuringiensis bacteriophage Bam35c).